The sequence spans 135 residues: DNA-directed RNA polymerase subunit omega (135 aa).

The segment at 84–106 (IAGHSSHVSPSRSSRHTGLGKSF) is disordered.

It belongs to the RNA polymerase subunit omega family. In terms of assembly, the RNAP catalytic core consists of 2 alpha, 1 beta, 1 beta' and 1 omega subunit. When a sigma factor is associated with the core the holoenzyme is formed, which can initiate transcription.

It catalyses the reaction RNA(n) + a ribonucleoside 5'-triphosphate = RNA(n+1) + diphosphate. Functionally, promotes RNA polymerase assembly. Latches the N- and C-terminal regions of the beta' subunit thereby facilitating its interaction with the beta and alpha subunits. The chain is DNA-directed RNA polymerase subunit omega from Anaplasma phagocytophilum (strain HZ).